Here is a 139-residue protein sequence, read N- to C-terminus: Putative pre-16S rRNA nuclease (139 aa).

This sequence belongs to the YqgF nuclease family.

The protein resides in the cytoplasm. Its function is as follows. Could be a nuclease involved in processing of the 5'-end of pre-16S rRNA. This Streptococcus thermophilus (strain ATCC BAA-491 / LMD-9) protein is Putative pre-16S rRNA nuclease.